We begin with the raw amino-acid sequence, 425 residues long: Riboflavin biosynthesis protein RibBA (425 aa).

Positions 1–204 (MTRLDSVERA…IADLIEWRRK (204 aa)) are DHBP synthase. Residues 28–29 (RE), Asp-33, 141–145 (RPGHT), and Glu-165 contribute to the D-ribulose 5-phosphate site. Glu-29 contacts Mg(2+). Position 144 (His-144) interacts with Mg(2+). The tract at residues 205–425 (HEKHIERIAE…HLPGEFGGAL (221 aa)) is GTP cyclohydrolase II. Residue 259–263 (RVHSE) coordinates GTP. Residues Cys-264, Cys-275, and Cys-277 each contribute to the Zn(2+) site. GTP contacts are provided by residues Gln-280, 303–305 (EGR), and Thr-325. Asp-337 (proton acceptor; for GTP cyclohydrolase activity) is an active-site residue. Arg-339 acts as the Nucleophile; for GTP cyclohydrolase activity in catalysis. Positions 360 and 365 each coordinate GTP.

In the N-terminal section; belongs to the DHBP synthase family. The protein in the C-terminal section; belongs to the GTP cyclohydrolase II family. Mg(2+) serves as cofactor. Mn(2+) is required as a cofactor. The cofactor is Zn(2+).

The enzyme catalyses D-ribulose 5-phosphate = (2S)-2-hydroxy-3-oxobutyl phosphate + formate + H(+). The catalysed reaction is GTP + 4 H2O = 2,5-diamino-6-hydroxy-4-(5-phosphoribosylamino)-pyrimidine + formate + 2 phosphate + 3 H(+). It functions in the pathway cofactor biosynthesis; riboflavin biosynthesis; 2-hydroxy-3-oxobutyl phosphate from D-ribulose 5-phosphate: step 1/1. Its pathway is cofactor biosynthesis; riboflavin biosynthesis; 5-amino-6-(D-ribitylamino)uracil from GTP: step 1/4. Its function is as follows. Catalyzes the conversion of D-ribulose 5-phosphate to formate and 3,4-dihydroxy-2-butanone 4-phosphate. In terms of biological role, catalyzes the conversion of GTP to 2,5-diamino-6-ribosylamino-4(3H)-pyrimidinone 5'-phosphate (DARP), formate and pyrophosphate. The chain is Riboflavin biosynthesis protein RibBA from Mycobacterium avium (strain 104).